Here is a 455-residue protein sequence, read N- to C-terminus: Kynurenine 3-monooxygenase (455 aa).

It belongs to the aromatic-ring hydroxylase family. KMO subfamily. FAD serves as cofactor.

The enzyme catalyses L-kynurenine + NADPH + O2 + H(+) = 3-hydroxy-L-kynurenine + NADP(+) + H2O. It participates in cofactor biosynthesis; NAD(+) biosynthesis; quinolinate from L-kynurenine: step 1/3. Catalyzes the hydroxylation of L-kynurenine (L-Kyn) to form 3-hydroxy-L-kynurenine (L-3OHKyn). Required for synthesis of quinolinic acid. The chain is Kynurenine 3-monooxygenase from Xanthomonas axonopodis pv. citri (strain 306).